The primary structure comprises 169 residues: Disulfide bond formation protein B 1 (169 aa).

Topologically, residues Met-1–Tyr-14 are cytoplasmic. Residues Leu-15–Tyr-31 form a helical membrane-spanning segment. At Met-32 to Tyr-49 the chain is on the periplasmic side. An intrachain disulfide couples Cys-41 to Cys-44. A helical membrane pass occupies residues Ala-50–Met-64. The Cytoplasmic segment spans residues Arg-65–Thr-71. A helical membrane pass occupies residues Val-72–Gly-89. Topologically, residues His-90–Gln-144 are periplasmic. Cys-102 and Cys-130 are disulfide-bonded. A helical transmembrane segment spans residues Trp-145–Arg-163. Topologically, residues Asn-164–Arg-169 are cytoplasmic.

This sequence belongs to the DsbB family.

It is found in the cell inner membrane. In terms of biological role, required for disulfide bond formation in some periplasmic proteins. Acts by oxidizing the DsbA protein. In Pseudomonas fluorescens (strain Pf0-1), this protein is Disulfide bond formation protein B 1.